The primary structure comprises 136 residues: uncharacterized protein (136 aa).

The disordered stretch occupies residues 1 to 100; it reads MQSREPSGWR…PCSGGPDRPE (100 aa). Residues 66–75 show a composition bias toward basic residues; it reads RLLRWHHRVP.

This is an uncharacterized protein from Homo sapiens (Human).